The sequence spans 99 residues: MATYQVRLINKKRNLDITLPVDEDTTVLEAAEEAELDLPFSCHSGACSSCVGKVVEGEINQDDQTFLDEEQVAKGFVLLCVTYPRTDCTIRTHQEAYLV.

Residues 4-96 form the 2Fe-2S ferredoxin-type domain; it reads YQVRLINKKR…DCTIRTHQEA (93 aa). 4 residues coordinate [2Fe-2S] cluster: C42, C47, C50, and C80.

It belongs to the 2Fe2S plant-type ferredoxin family. The cofactor is [2Fe-2S] cluster.

Functionally, ferredoxins are iron-sulfur proteins that transfer electrons in a wide variety of metabolic reactions. Donates electrons to the nitrogenase. This Leptolyngbya boryana (Plectonema boryanum) protein is Ferredoxin-2 (fdxH).